The chain runs to 509 residues: Phytase A (509 aa).

Residues 1–15 (MFLLMVPLFSYLAAA) form the signal peptide. Cysteine 27 and cysteine 36 are joined by a disulfide. 1D-myo-inositol hexakisphosphate is bound by residues glutamine 46, tyrosine 47, arginine 75, histidine 76, arginine 79, threonine 82, and arginine 164. Disulfide bonds link cysteine 65-cysteine 444, cysteine 216-cysteine 507, cysteine 266-cysteine 295, and cysteine 478-cysteine 486. Histidine 76 functions as the Nucleophile in the catalytic mechanism. N-linked (GlcNAc...) asparagine glycans are attached at residues asparagine 171 and asparagine 208. Lysine 314 contacts 1D-myo-inositol hexakisphosphate. N-linked (GlcNAc...) asparagine glycosylation is found at asparagine 348, asparagine 352, and asparagine 367. 1D-myo-inositol hexakisphosphate-binding residues include histidine 376 and aspartate 377. The N-linked (GlcNAc...) asparagine glycan is linked to asparagine 401.

The protein belongs to the histidine acid phosphatase family. In terms of assembly, monomer.

It localises to the secreted. It catalyses the reaction 1D-myo-inositol hexakisphosphate + H2O = 1D-myo-inositol 1,2,4,5,6-pentakisphosphate + phosphate. The enzyme catalyses 1D-myo-inositol 1,2,4,5,6-pentakisphosphate + H2O = 1D-myo-inositol 1,2,5,6-tetrakisphosphate + phosphate. It carries out the reaction 1D-myo-inositol 1,2,5,6-tetrakisphosphate + H2O = 1D-myo-inositol 1,2,6-trisphosphate + phosphate. The catalysed reaction is 1D-myo-inositol 1,2,6-trisphosphate + H2O = 1D-myo-inositol 1,2-bisphosphate + phosphate. It catalyses the reaction 1D-myo-inositol 1,2-bisphosphate + H2O = 1D-myo-inositol 2-phosphate + phosphate. Catalyzes the phosphate monoester hydrolysis of phytic acid (myo-inositol hexakisphosphate), which results in the stepwise formation of myo-inositol pentakis-, tetrakis-, tris-, bis-, and monophosphates, as well as the liberation of inorganic phosphate. Myo-inositol 2-monophosphate is the end product. Is also able to dephosphorylate the classic acid phosphatase substrate p-nitrophenyl phosphate. This chain is Phytase A (pht-1), found in Neurospora crassa (strain ATCC 24698 / 74-OR23-1A / CBS 708.71 / DSM 1257 / FGSC 987).